Here is a 456-residue protein sequence, read N- to C-terminus: Bifunctional protein GlmU (456 aa).

Residues 1–229 (MLNNAMSVVI…LSEVEGVNNR (229 aa)) form a pyrophosphorylase region. Residues 11–14 (LAAG), lysine 25, glutamine 76, 81–82 (GT), 103–105 (YGD), glycine 140, glutamate 154, asparagine 169, and asparagine 227 each bind UDP-N-acetyl-alpha-D-glucosamine. Aspartate 105 serves as a coordination point for Mg(2+). Asparagine 227 serves as a coordination point for Mg(2+). The segment at 230-250 (LQLSRLERVYQSEQAEKLLLA) is linker. Residues 251–456 (GVMLRDPARF…EGWRRPVKKK (206 aa)) are N-acetyltransferase. UDP-N-acetyl-alpha-D-glucosamine is bound by residues arginine 333 and lysine 351. Histidine 363 serves as the catalytic Proton acceptor. UDP-N-acetyl-alpha-D-glucosamine contacts are provided by tyrosine 366 and asparagine 377. Acetyl-CoA contacts are provided by residues alanine 380, 386-387 (NY), serine 405, alanine 423, and arginine 440.

It in the N-terminal section; belongs to the N-acetylglucosamine-1-phosphate uridyltransferase family. The protein in the C-terminal section; belongs to the transferase hexapeptide repeat family. As to quaternary structure, homotrimer. The cofactor is Mg(2+).

It is found in the cytoplasm. The enzyme catalyses alpha-D-glucosamine 1-phosphate + acetyl-CoA = N-acetyl-alpha-D-glucosamine 1-phosphate + CoA + H(+). It catalyses the reaction N-acetyl-alpha-D-glucosamine 1-phosphate + UTP + H(+) = UDP-N-acetyl-alpha-D-glucosamine + diphosphate. It participates in nucleotide-sugar biosynthesis; UDP-N-acetyl-alpha-D-glucosamine biosynthesis; N-acetyl-alpha-D-glucosamine 1-phosphate from alpha-D-glucosamine 6-phosphate (route II): step 2/2. The protein operates within nucleotide-sugar biosynthesis; UDP-N-acetyl-alpha-D-glucosamine biosynthesis; UDP-N-acetyl-alpha-D-glucosamine from N-acetyl-alpha-D-glucosamine 1-phosphate: step 1/1. Its pathway is bacterial outer membrane biogenesis; LPS lipid A biosynthesis. Functionally, catalyzes the last two sequential reactions in the de novo biosynthetic pathway for UDP-N-acetylglucosamine (UDP-GlcNAc). The C-terminal domain catalyzes the transfer of acetyl group from acetyl coenzyme A to glucosamine-1-phosphate (GlcN-1-P) to produce N-acetylglucosamine-1-phosphate (GlcNAc-1-P), which is converted into UDP-GlcNAc by the transfer of uridine 5-monophosphate (from uridine 5-triphosphate), a reaction catalyzed by the N-terminal domain. The sequence is that of Bifunctional protein GlmU from Escherichia coli O45:K1 (strain S88 / ExPEC).